The following is a 213-amino-acid chain: MKAYQREFIEFALEKQVLKFGEFTLKSGRKSPYFFNAGLFNTGRDLARLGRFYAAALADSGIEFDVLFGPAYKGIPIATTTAVALADHHDIDTPYCFNRKEAKDHGEGGNLVGSALEGRIMLVDDVITAGTAIRESMEIIQANGADLAGVLVAIDRQEKGKGELSAIQEVERDFACAVISIVSLSDLITFLEEKGDTAEHLDAVKAYRAQYGI.

Lys26 contributes to the 5-phospho-alpha-D-ribose 1-diphosphate binding site. Residue Phe34–Phe35 participates in orotate binding. Residues Tyr72–Lys73, Arg99, Lys100, Lys103, His105, and Asp124–Ala132 contribute to the 5-phospho-alpha-D-ribose 1-diphosphate site. Residues Thr128 and Arg156 each coordinate orotate.

The protein belongs to the purine/pyrimidine phosphoribosyltransferase family. PyrE subfamily. As to quaternary structure, homodimer. The cofactor is Mg(2+).

It carries out the reaction orotidine 5'-phosphate + diphosphate = orotate + 5-phospho-alpha-D-ribose 1-diphosphate. It functions in the pathway pyrimidine metabolism; UMP biosynthesis via de novo pathway; UMP from orotate: step 1/2. In terms of biological role, catalyzes the transfer of a ribosyl phosphate group from 5-phosphoribose 1-diphosphate to orotate, leading to the formation of orotidine monophosphate (OMP). The sequence is that of Orotate phosphoribosyltransferase from Vibrio vulnificus (strain YJ016).